Reading from the N-terminus, the 227-residue chain is MTQSTHDGHAAHSLHGGVYPGNLFMVVAPSGAGKSTLVNALLSKDSDICLSISYTTRKPRPGEQDGQHYHFTTVEDFRTRHAAHEFLESAEVHGNYYGTSRVWIEEQMKNGHDVLLEIDWQGALQVKKQFRNAVGIFILPPSLDALEERLKKRGQDEPKVITRRLLAAGSEIAHAPEAEYVVINENFERALAELECIVAATRLRFASQYARHTELFIELGIHLPHAE.

A Guanylate kinase-like domain is found at 21–199 (GNLFMVVAPS…ALAELECIVA (179 aa)). 28–35 (APSGAGKS) serves as a coordination point for ATP.

The protein belongs to the guanylate kinase family.

The protein localises to the cytoplasm. The catalysed reaction is GMP + ATP = GDP + ADP. Functionally, essential for recycling GMP and indirectly, cGMP. The chain is Guanylate kinase from Burkholderia lata (strain ATCC 17760 / DSM 23089 / LMG 22485 / NCIMB 9086 / R18194 / 383).